The following is a 393-amino-acid chain: S-adenosylmethionine synthase 2 (393 aa).

E9 provides a ligand contact to Mg(2+). H15 serves as a coordination point for ATP. E43 contributes to the K(+) binding site. Residues E56 and Q99 each coordinate L-methionine. ATP contacts are provided by residues 167 to 169, 235 to 238, D246, 252 to 253, A269, K273, and K277; these read DGK, SGRF, and RK. Position 246 (D246) interacts with L-methionine. K277 is a binding site for L-methionine.

This sequence belongs to the AdoMet synthase family. In terms of assembly, homotetramer. Mn(2+) is required as a cofactor. Mg(2+) serves as cofactor. The cofactor is Co(2+). Requires K(+) as cofactor. It depends on NH4(+) as a cofactor. As to expression, mostly expressed in roots, and, to a lower extent, in hypocotyls and cotyledons.

It localises to the cytoplasm. It carries out the reaction L-methionine + ATP + H2O = S-adenosyl-L-methionine + phosphate + diphosphate. Its pathway is amino-acid biosynthesis; S-adenosyl-L-methionine biosynthesis; S-adenosyl-L-methionine from L-methionine: step 1/1. With respect to regulation, inhibited by products of SAMS reaction (SAM, Pi, PPi), substrate analogs (cycloleucine and ethionine), and alternative nucleotides (GTP, CTP and ADP). Strongly repressed by PPPi. In terms of biological role, catalyzes the formation of S-adenosylmethionine from methionine and ATP. The reaction comprises two steps that are both catalyzed by the same enzyme: formation of S-adenosylmethionine (AdoMet) and triphosphate, and subsequent hydrolysis of the triphosphate. The polypeptide is S-adenosylmethionine synthase 2 (SAMS2) (Catharanthus roseus (Madagascar periwinkle)).